Here is a 207-residue protein sequence, read N- to C-terminus: Large ribosomal subunit protein uL4 (207 aa).

A disordered region spans residues Ala-55 to Gly-76. The span at Lys-63–Gly-76 shows a compositional bias: basic residues.

Belongs to the universal ribosomal protein uL4 family. Part of the 50S ribosomal subunit.

In terms of biological role, one of the primary rRNA binding proteins, this protein initially binds near the 5'-end of the 23S rRNA. It is important during the early stages of 50S assembly. It makes multiple contacts with different domains of the 23S rRNA in the assembled 50S subunit and ribosome. Its function is as follows. Forms part of the polypeptide exit tunnel. The protein is Large ribosomal subunit protein uL4 of Phytoplasma mali (strain AT).